Consider the following 2962-residue polypeptide: Sex determination and dosage compensation protein sdc-2 (2962 aa).

Disordered regions lie at residues 1-28 and 1061-1110; these read MSDE…ADPD and DKRS…QVDP. Residues 15 to 27 are compositionally biased toward acidic residues; that stretch reads SFNESDSPDEADP. Coiled coils occupy residues 995 to 1085 and 1140 to 1268; these read LESA…LADK and REER…KRVS. 2 disordered regions span residues 1535-1554 and 2198-2227; these read PASL…GSPV and LDSS…NQLD. A compositionally biased stretch (acidic residues) spans 2212–2225; that stretch reads FEDSPSEDENDENQ.

As to quaternary structure, component of the SDC complex, which consists of sdc-1, sdc-2 and sdc-3. Within the complex, interacts with sdc-1 and sdc-3. Expressed in hermaphrodites (XX), but absent in males (XO) (at protein level).

The protein localises to the chromosome. In terms of biological role, component of the SDC complex that functions in sex determination and in X chromosome dosage compensation specifically in hermaphrodite (XX) animals. Required for the recruitment of the condensin I-like dosage compensation complex to the male sex-determining autosomal gene her-1, thereby contributing to its repression and initiating hermaphrodite sexual development. Plays a central role in X-chromosome recognition and in the recruitment and assembly of the dosage compensation complex and the dosage compensation protein dpy-21 onto the X chromosomes in hermaphrodites, which leads to a reduction of X-linked gene transcription and an equalization of X-linked gene expression between the sexes. May confer protection against toxicity induced by heavy metals such as arsenite. This chain is Sex determination and dosage compensation protein sdc-2, found in Caenorhabditis elegans.